A 136-amino-acid chain; its full sequence is Histone H3.3 (136 aa).

The disordered stretch occupies residues 1-45 (MARTKQTARKSTGGKAPRKQLASKAARKAAPATGGVKKPHRYRPP). Lys5 bears the N6,N6,N6-trimethyllysine; alternate mark. N6,N6-dimethyllysine; alternate is present on Lys5. 2 positions are modified to N6-methyllysine; alternate: Lys5 and Lys10. Lys10 is modified (N6-acetyllysine; alternate). Ser11 carries the post-translational modification Phosphoserine. Lys15 carries the post-translational modification N6,N6-dimethyllysine; alternate. Lys15, Lys19, Lys24, Lys28, and Lys37 each carry N6-acetyllysine; alternate. An N6-methyllysine; alternate mark is found at Lys19, Lys24, Lys28, and Lys37. The span at 19-32 (KQLASKAARKAAPA) shows a compositional bias: low complexity. N6,N6,N6-trimethyllysine; alternate is present on residues Lys28 and Lys37. Lys28 and Lys37 each carry N6,N6-dimethyllysine; alternate. Residues Lys57 and Lys65 each carry the N6-acetyllysine modification. At Lys80 the chain carries N6,N6,N6-trimethyllysine; alternate. Lys80 carries the N6,N6-dimethyllysine; alternate modification. An N6-methyllysine; alternate modification is found at Lys80. Lys123 carries the post-translational modification N6-acetyllysine.

It belongs to the histone H3 family. In terms of assembly, the nucleosome is a histone octamer containing two molecules each of H2A, H2B, H3 and H4 assembled in one H3-H4 heterotetramer and two H2A-H2B heterodimers. The octamer wraps approximately 147 bp of DNA. Post-translationally, phosphorylated by ark1 to form H3S10ph in a cell cycle-dependent manner during mitosis and meiosis. H3S10ph is also formed by ssp2, promotes subsequent H3K14ac formation by gcn5, and is required for transcriptional activation through TBP recruitment to the promoters. Dephosphorylation is performed by sds21. In terms of processing, mono-, di- and trimethylated by the COMPASS complex to form H3K4me1/2/3. H3K4me activates gene expression by regulating transcription elongation and plays a role in telomere length maintenance. H3K4me enrichment correlates with transcription levels, and occurs in a 5' to 3' gradient with H3K4me3 enrichment at the 5'-end of genes, shifting to H3K4me2 and then H3K4me1. Methylated by clr4 to form H3K9me1. H3K9me1 represents a specific tag for epigenetic transcriptional repression by recruiting swi6/HP1 to methylated histones. Targeting to histone probably involves clr3 and rik1. Essential for silencing of centromeres and directional switching of the mating type. Methylated by set2 to form H3K36me. H3K36me represses gene expression. Methylated by dot1 to form H3K79me. H3K79me is required for association of SIR proteins with telomeric regions and for telomeric silencing. The COMPASS-mediated formation of H3K4me2/3 and the dot1-mediated formation of H3K79me require H2BK123ub1. Acetylation of histone H3 leads to transcriptional activation. H3K14ac formation by gcn5 is promoted by H3S10ph. H3K14ac can also be formed by esa1. H3K56ac formation occurs predominantly in newly synthesized H3 molecules during G1, S and G2/M of the cell cycle and may be involved in DNA repair. Acetylation at Lys-123 (H3K122ac) plays a central role in chromatin structure: localizes at the surface of the histone octamer and stimulates transcription, possibly by promoting nucleosome instability.

The protein resides in the nucleus. It is found in the chromosome. Its function is as follows. Core component of nucleosome. Nucleosomes wrap and compact DNA into chromatin, limiting DNA accessibility to the cellular machineries which require DNA as a template. Histones thereby play a central role in transcription regulation, DNA repair, DNA replication and chromosomal stability. DNA accessibility is regulated via a complex set of post-translational modifications of histones, also called histone code, and nucleosome remodeling. In Schizosaccharomyces pombe (strain 972 / ATCC 24843) (Fission yeast), this protein is Histone H3.3 (hht3).